The sequence spans 217 residues: MVKLGCSFSGKPGKDPGDQDGAAMDSVPLISPLDISQLQPPLPDQVVIKTQTEYQLSSPDQQNFPDLEGQRLNCSHPEEGRRLPTARMIAFAMALLGCVLIMYKAIWYDQFTCPDGFLLRHKICTPLTLEMYYTEMDPERHRSILAAIGAYPLSRKHGTETPAAWGDGYRAAKEERKGPTQAGAAAAATEPPGKPSAKAEKEAARKAAGSAAPPPAQ.

Residues 1 to 25 (MVKLGCSFSGKPGKDPGDQDGAAMD) form a disordered region. Residues 1–87 (MVKLGCSFSG…EEGRRLPTAR (87 aa)) are Extracellular-facing. N-linked (GlcNAc...) asparagine glycosylation occurs at asparagine 73. The helical transmembrane segment at 88–108 (MIAFAMALLGCVLIMYKAIWY) threads the bilayer. The Cytoplasmic segment spans residues 109–217 (DQFTCPDGFL…AGSAAPPPAQ (109 aa)). The tract at residues 162-217 (PAAWGDGYRAAKEERKGPTQAGAAAAATEPPGKPSAKAEKEAARKAAGSAAPPPAQ) is disordered.

It belongs to the NSG family. As to quaternary structure, interacts with CLTA. Post-translationally, glycosylated. As to expression, expressed in the pyramidal cells of the prefrontal cortex, in hypothalamus and in caudate nucleus. No expression in spleen. Up-regulated in the prefrontal cortex of schizophrenic patients with nearly twice the levels of non-schizophrenics.

The protein localises to the cytoplasmic vesicle membrane. It is found in the cell membrane. Functionally, interacts with clathrin light chain A and stimulates clathrin self-assembly and clathrin-mediated endocytosis. This chain is Neuron-specific vesicular protein calcyon (CALY), found in Homo sapiens (Human).